Here is a 636-residue protein sequence, read N- to C-terminus: tRNA uridine 5-carboxymethylaminomethyl modification enzyme MnmG (636 aa).

Position 18 to 23 (18 to 23) interacts with FAD; the sequence is GAGHAG. 281–295 contributes to the NAD(+) binding site; it reads GPRYCPSIEDKIVRF.

The protein belongs to the MnmG family. As to quaternary structure, homodimer. Heterotetramer of two MnmE and two MnmG subunits. FAD is required as a cofactor.

Its subcellular location is the cytoplasm. NAD-binding protein involved in the addition of a carboxymethylaminomethyl (cmnm) group at the wobble position (U34) of certain tRNAs, forming tRNA-cmnm(5)s(2)U34. The protein is tRNA uridine 5-carboxymethylaminomethyl modification enzyme MnmG of Lactiplantibacillus plantarum (strain ATCC BAA-793 / NCIMB 8826 / WCFS1) (Lactobacillus plantarum).